A 181-amino-acid chain; its full sequence is Thioredoxin M-type, chloroplastic (181 aa).

Residues Met-1–Cys-67 constitute a chloroplast transit peptide. One can recognise a Thioredoxin domain in the interval Lys-68 to Ser-180. Residues Cys-104 and Cys-107 each act as nucleophile in the active site. The cysteines at positions 104 and 107 are disulfide-linked.

This sequence belongs to the thioredoxin family. Plant M-type subfamily. Forms a complex with heterodimeric ferredoxin-thioredoxin reductase (FTR) and ferredoxin.

Its subcellular location is the plastid. The protein localises to the chloroplast. Participates in various redox reactions through the reversible oxidation of the active center dithiol to a disulfide. The M form is known to activate NADP-malate dehydrogenase. This Spinacia oleracea (Spinach) protein is Thioredoxin M-type, chloroplastic.